An 833-amino-acid chain; its full sequence is Leucine--tRNA ligase (833 aa).

The 'HIGH' region signature appears at 41–52 (PYPSGAGLHVGH). A 'KMSKS' region motif is present at residues 610–614 (KMSKS). K613 lines the ATP pocket.

Belongs to the class-I aminoacyl-tRNA synthetase family.

The protein resides in the cytoplasm. The catalysed reaction is tRNA(Leu) + L-leucine + ATP = L-leucyl-tRNA(Leu) + AMP + diphosphate. This is Leucine--tRNA ligase from Streptococcus mutans serotype c (strain ATCC 700610 / UA159).